A 311-amino-acid chain; its full sequence is Energy-coupling factor transporter ATP-binding protein EcfA2 (311 aa).

Positions 3–265 constitute an ABC transporter domain; that stretch reads IKLKDVKFTF…IAFLEENNLQ (263 aa). 40–47 is an ATP binding site; sequence GQTGSGKT.

This sequence belongs to the ABC transporter superfamily. Energy-coupling factor EcfA family. Forms a stable energy-coupling factor (ECF) transporter complex composed of 2 membrane-embedded substrate-binding proteins (S component), 2 ATP-binding proteins (A component) and 2 transmembrane proteins (T component).

The protein localises to the cell membrane. Functionally, ATP-binding (A) component of a common energy-coupling factor (ECF) ABC-transporter complex. Unlike classic ABC transporters this ECF transporter provides the energy necessary to transport a number of different substrates. This is Energy-coupling factor transporter ATP-binding protein EcfA2 from Mycoplasmopsis synoviae (strain 53) (Mycoplasma synoviae).